The sequence spans 314 residues: Olfactory receptor 5P68 (314 aa).

Over 1 to 28 (MAFLHNGNHTAVTEFILLGLTDDPVFRV) the chain is Extracellular. An N-linked (GlcNAc...) asparagine glycan is attached at Asn-8. A helical transmembrane segment spans residues 29-49 (ILFTIILCIYLVTVSGNLSTI). At 50-57 (LLIRVSSQ) the chain is on the cytoplasmic side. Residues 58 to 78 (LHHPMYFFLSHLASVDIGYSS) traverse the membrane as a helical segment. Topologically, residues 79-102 (SVTPNMLANFLVEKNTISYLGCTI) are extracellular. An intrachain disulfide couples Cys-100 to Cys-192. Residues 103-123 (QLSLAAFCGTVECFLLATMAY) traverse the membrane as a helical segment. The Cytoplasmic segment spans residues 124–136 (DRFMAICSPLLYS). Residues 137–157 (TKMSTQVCIQLIVGSYIGGFL) form a helical membrane-spanning segment. Over 158-199 (NASSFTLFFLSFLFCGPNRINHFYCDFAPLVALSCSDVSVSE) the chain is Extracellular. Residues 200-220 (VVTSFFSGSVTMITMLVIAIS) traverse the membrane as a helical segment. The Cytoplasmic segment spans residues 221 to 240 (YTYILITILKMRSTEGRHKA). The helical transmembrane segment at 241-261 (FSTCTSHLTAVTLFYGTITFI) threads the bilayer. Residues 262–274 (YVMPKSSFSTDQN) lie on the Extracellular side of the membrane. A helical membrane pass occupies residues 275-295 (KVVSVFYMVVIPMLNPLIYSL). At 296–314 (RNNEIKDALKRHLGKKIFS) the chain is on the cytoplasmic side.

Belongs to the G-protein coupled receptor 1 family.

It is found in the cell membrane. Potential odorant receptor. In Mus musculus (Mouse), this protein is Olfactory receptor 5P68.